The primary structure comprises 861 residues: Semaphorin-4D (861 aa).

The first 23 residues, 1 to 23 (MRMCAPVRGLFLALVVVLRTAVA), serve as a signal peptide directing secretion. In terms of domain architecture, Sema spans 24-500 (FAPVPRLTWE…SNSGVVQAPL (477 aa)). At 24-733 (FAPVPRLTWE…TVYLKSSDNR (710 aa)) the chain is on the extracellular side. Asn-49 and Asn-77 each carry an N-linked (GlcNAc...) asparagine glycan. Cystine bridges form between Cys-97-Cys-108 and Cys-126-Cys-135. Asn-139 and Asn-191 each carry an N-linked (GlcNAc...) asparagine glycan. Intrachain disulfides connect Cys-257-Cys-370 and Cys-281-Cys-326. Asn-379 and Asn-419 each carry an N-linked (GlcNAc...) asparagine glycan. Residues 502 to 551 (FCEKHGSCEDCVLARDPYCAWSPAIKACVTLHQEEASSRGWIQDMSGDTS) form the PSI domain. Disulfide bonds link Cys-503-Cys-520, Cys-509-Cys-553, Cys-512-Cys-529, and Cys-576-Cys-624. The 82-residue stretch at 555 to 636 (DKSKESFNQH…EERVRNKTVS (82 aa)) folds into the Ig-like C2-type domain. Residues Asn-613 and Asn-632 are each glycosylated (N-linked (GlcNAc...) asparagine). A disordered region spans residues 649–709 (VPRTPPSPTS…KSSSGTSCEP (61 aa)). Polar residues predominate over residues 657 to 681 (TSEDAQTEGSKITSKMPVASTQGSS). The helical transmembrane segment at 734–754 (LLMSLLLFIFVLFLCLFSYNC) threads the bilayer. Topologically, residues 755 to 861 (YKGYLPGQCL…KFADSDADGD (107 aa)) are cytoplasmic. A phosphoserine mark is found at Ser-782 and Ser-832. Residues 793-839 (VEPGSFSQQNGDHPKPALDTGYETEQDTITSKVPTDREDSQRIDELS) form a disordered region. Positions 826 to 839 (PTDREDSQRIDELS) are enriched in basic and acidic residues.

Belongs to the semaphorin family. In terms of assembly, homodimer. Interacts with PLXNB1. Interacts with PLXNB2. Strongly expressed in lymphoid tissues, especially in the thymus, as well as in the nervous tissues. Expressed in neurons and glia in the developing hippocampus.

It is found in the cell membrane. In terms of biological role, cell surface receptor for PLXNB1 and PLXNB2 that plays an important role in cell-cell signaling. Regulates GABAergic synapse development. Promotes the development of inhibitory synapses in a PLXNB1-dependent manner. Modulates the complexity and arborization of developing neurites in hippocampal neurons by activating PLXNB1 and interaction with PLXNB1 mediates activation of RHOA. Promotes the migration of cerebellar granule cells. Plays a role in the immune system; induces B-cells to aggregate and improves their viability (in vitro). Induces endothelial cell migration through the activation of PTK2B/PYK2, SRC, and the phosphatidylinositol 3-kinase-AKT pathway. The protein is Semaphorin-4D (Sema4d) of Mus musculus (Mouse).